A 473-amino-acid chain; its full sequence is Photosystem II CP43 reaction center protein (473 aa).

Residues Met1–Glu14 constitute a propeptide that is removed on maturation. Thr15 carries the post-translational modification N-acetylthreonine. Phosphothreonine is present on Thr15. The next 5 helical transmembrane spans lie at Leu69–Ala93, Leu134–Asn155, Lys178–Thr200, Lys255–Ser275, and Trp291–Ala312. Glu367 provides a ligand contact to [CaMn4O5] cluster. A helical membrane pass occupies residues Arg447–Pro471.

This sequence belongs to the PsbB/PsbC family. PsbC subfamily. As to quaternary structure, PSII is composed of 1 copy each of membrane proteins PsbA, PsbB, PsbC, PsbD, PsbE, PsbF, PsbH, PsbI, PsbJ, PsbK, PsbL, PsbM, PsbT, PsbX, PsbY, PsbZ, Psb30/Ycf12, at least 3 peripheral proteins of the oxygen-evolving complex and a large number of cofactors. It forms dimeric complexes. Requires Binds multiple chlorophylls and provides some of the ligands for the Ca-4Mn-5O cluster of the oxygen-evolving complex. It may also provide a ligand for a Cl- that is required for oxygen evolution. PSII binds additional chlorophylls, carotenoids and specific lipids. as cofactor.

It localises to the plastid. The protein localises to the chloroplast thylakoid membrane. In terms of biological role, one of the components of the core complex of photosystem II (PSII). It binds chlorophyll and helps catalyze the primary light-induced photochemical processes of PSII. PSII is a light-driven water:plastoquinone oxidoreductase, using light energy to abstract electrons from H(2)O, generating O(2) and a proton gradient subsequently used for ATP formation. In Saccharum hybrid (Sugarcane), this protein is Photosystem II CP43 reaction center protein.